A 669-amino-acid polypeptide reads, in one-letter code: DNA ligase (669 aa).

Residues 33–37 (DVTYD), 82–83 (SL), and Glu115 each bind NAD(+). Residue Lys117 is the N6-AMP-lysine intermediate of the active site. NAD(+) contacts are provided by Arg138, Glu172, Lys286, and Lys310. Zn(2+) contacts are provided by Cys401, Cys404, Cys417, and Cys422. The BRCT domain occupies 589 to 669 (VDSSFLFGKK…DIKNLVNLDD (81 aa)).

It belongs to the NAD-dependent DNA ligase family. LigA subfamily. Requires Mg(2+) as cofactor. Mn(2+) serves as cofactor.

It carries out the reaction NAD(+) + (deoxyribonucleotide)n-3'-hydroxyl + 5'-phospho-(deoxyribonucleotide)m = (deoxyribonucleotide)n+m + AMP + beta-nicotinamide D-nucleotide.. Functionally, DNA ligase that catalyzes the formation of phosphodiester linkages between 5'-phosphoryl and 3'-hydroxyl groups in double-stranded DNA using NAD as a coenzyme and as the energy source for the reaction. It is essential for DNA replication and repair of damaged DNA. The sequence is that of DNA ligase from Borrelia duttonii (strain Ly).